A 146-amino-acid polypeptide reads, in one-letter code: Hemoglobin subunit beta (146 aa).

Valine 1 carries the post-translational modification N-acetylvaline. Residues 2-146 (HLTAEEKSLV…VANALAHKYH (145 aa)) form the Globin domain. A Phosphoserine modification is found at serine 44. Lysine 59 is modified (N6-acetyllysine). Position 63 (histidine 63) interacts with heme b. The residue at position 82 (lysine 82) is an N6-acetyllysine. Histidine 92 serves as a coordination point for heme b. The residue at position 93 (cysteine 93) is an S-nitrosocysteine. Position 144 is an N6-acetyllysine (lysine 144).

Belongs to the globin family. In terms of assembly, heterotetramer of two alpha chains and two beta chains. As to expression, red blood cells.

Its function is as follows. Involved in oxygen transport from the lung to the various peripheral tissues. The protein is Hemoglobin subunit beta (HBB) of Canis latrans (Coyote).